Reading from the N-terminus, the 282-residue chain is Transcription factor MYB1 (282 aa).

HTH myb-type domains are found at residues 9-61 and 62-116; these read KEGL…LNYL and RPDI…SKKV. DNA-binding regions (H-T-H motif) lie at residues 37–61 and 89–112; these read WRDLPRRAGLKRCGKSCRLRWLNYL and WSLIAGRLPGRTDNEIKNYWNTYL. The disordered stretch occupies residues 258–282; it reads EDDWKQNGGKDELMGGGNGGPSSVS. Positions 260–270 are enriched in basic and acidic residues; that stretch reads DWKQNGGKDEL. Positions 271 to 282 are enriched in gly residues; sequence MGGGNGGPSSVS.

The protein localises to the nucleus. Transcription activator involved in the spatiotemporal regulation of flavonoid biosynthesis specifically in the corms of Montbretia. Activates the promoters of enzymes involved in the biosynthesis of the flavonol kaempferol and the flavonol-glycoside kaempferol-rhamnoside. The sequence is that of Transcription factor MYB1 from Crocosmia x crocosmiiflora (Montbretia).